Here is a 291-residue protein sequence, read N- to C-terminus: Porphobilinogen deaminase (291 aa).

Residue Cys237 is modified to S-(dipyrrolylmethanemethyl)cysteine.

Belongs to the HMBS family. Monomer. Dipyrromethane is required as a cofactor.

It catalyses the reaction 4 porphobilinogen + H2O = hydroxymethylbilane + 4 NH4(+). Its pathway is porphyrin-containing compound metabolism; protoporphyrin-IX biosynthesis; coproporphyrinogen-III from 5-aminolevulinate: step 2/4. Functionally, tetrapolymerization of the monopyrrole PBG into the hydroxymethylbilane pre-uroporphyrinogen in several discrete steps. In Clostridium perfringens (strain 13 / Type A), this protein is Porphobilinogen deaminase.